The sequence spans 369 residues: Actin-related protein T3 (369 aa).

The protein belongs to the actin family. Interacts with PFN3. Testis specific (at protein level). Expressed specifically in haploid germ cells.

The protein resides in the cytoplasm. It is found in the cytoskeleton. Its subcellular location is the nucleus. This Mus musculus (Mouse) protein is Actin-related protein T3 (Actrt3).